Consider the following 373-residue polypeptide: Putative F-box protein At1g76830 (373 aa).

An F-box domain is found at 4 to 49 (ITSFENLPEELKREILLRMSPNSLVTCSRVSKKLASMIRTKSFKEL).

This Arabidopsis thaliana (Mouse-ear cress) protein is Putative F-box protein At1g76830.